A 161-amino-acid polypeptide reads, in one-letter code: Nucleotide-binding protein xcc-b100_3818 (161 aa).

It belongs to the YajQ family.

Its function is as follows. Nucleotide-binding protein. The chain is Nucleotide-binding protein xcc-b100_3818 from Xanthomonas campestris pv. campestris (strain B100).